A 400-amino-acid chain; its full sequence is Zinc finger CCHC domain-containing protein 3 (400 aa).

Positions 1 to 157 are disordered; sequence MATGGGAEEE…LQDEPPAAGP (157 aa). Basic and acidic residues-rich tracts occupy residues 26–38 and 47–63; these read ARVE…REKM and LAEK…RDET. The span at 66–75 shows a compositional bias: gly residues; the sequence is GASGGLGSPG. Over residues 91-109 the composition is skewed to basic and acidic residues; it reads GDPKGRRRDPTGEASDAYR. Residue Tyr-198 is modified to Phosphotyrosine. 2 consecutive CCHC-type zinc fingers follow at residues 349 to 365 and 369 to 384; these read RCFR…YCRK and CNLC…QCPK.

Interacts with CGAS. Interacts with RIGI. Interacts with IFIH1/MDA5.

The protein resides in the cytoplasm. Nucleic acid-binding protein involved in innate immune response to DNA and RNA viruses. Binds DNA and RNA in the cytoplasm and acts by promoting recognition of viral nucleic acids by virus sensors, such as RIGI, IFIH1/MDA5 and CGAS. Acts as a co-sensor for recognition of double-stranded DNA (dsDNA) by cGAS in the cytoplasm, thereby playing a role in innate immune response to cytosolic dsDNA and DNA virus. Binds dsDNA and probably acts by promoting sensing of dsDNA by CGAS, leading to enhance CGAS oligomerization and activation. Promotes sensing of viral RNA by RIG-I-like receptors proteins RIGI and IFIH1/MDA5 via two mechanisms: binds double-stranded RNA (dsRNA), enhancing the binding of RIGI and IFIH1/MDA5 to dsRNA and promotes 'Lys-63'-linked ubiquitination and subsequent activation of RIGI and IFIH1/MDA5. The polypeptide is Zinc finger CCHC domain-containing protein 3 (Mus musculus (Mouse)).